The chain runs to 240 residues: Anti-H(O) lectin (240 aa).

Asparagine 4 carries an N-linked (GlcNAc...) asparagine glycan. 2 residues coordinate Mn(2+): glutamate 124 and aspartate 126. Positions 126, 128, 130, and 133 each coordinate Ca(2+). The Mn(2+) site is built by aspartate 133 and histidine 141.

Belongs to the leguminous lectin family.

Its function is as follows. L-fucose specific lectin. This is Anti-H(O) lectin from Lotus tetragonolobus (Winged pea).